We begin with the raw amino-acid sequence, 98 residues long: Defensin-like protein 68 (98 aa).

The signal sequence occupies residues 1–19 (MGSSKLLVALTLVVMITIS). Intrachain disulfides connect cysteine 38/cysteine 88, cysteine 42/cysteine 65, cysteine 51/cysteine 86, and cysteine 55/cysteine 87.

It belongs to the DEFL family.

The protein localises to the secreted. In Arabidopsis thaliana (Mouse-ear cress), this protein is Defensin-like protein 68.